A 685-amino-acid polypeptide reads, in one-letter code: Galactocerebrosidase (685 aa).

Positions 1-42 are cleaved as a signal peptide; the sequence is MAEWLLSASWQRRAKAMTAAAGSAGRAAVPLLLCALLAPGGA. Residue threonine 109 participates in substrate binding. Asparagine 143 is a glycosylation site (N-linked (GlcNAc...) asparagine). Residues tryptophan 151 and asparagine 197 each contribute to the substrate site. The Proton donor/acceptor role is filled by glutamate 198. Glutamate 274 functions as the Nucleophile in the catalytic mechanism. A disulfide bridge connects residues cysteine 287 and cysteine 394. N-linked (GlcNAc...) asparagine glycosylation is present at asparagine 379. Residue arginine 396 participates in substrate binding. 4 N-linked (GlcNAc...) asparagine glycosylation sites follow: asparagine 403, asparagine 556, asparagine 559, and asparagine 602.

This sequence belongs to the glycosyl hydrolase 59 family. In terms of tissue distribution, detected in urine. Detected in testis, brain and placenta (at protein level). Detected in kidney and liver.

The protein localises to the lysosome. The catalysed reaction is a beta-D-galactosyl-(1&lt;-&gt;1')-N-acylsphing-4-enine + H2O = an N-acylsphing-4-enine + D-galactose. It catalyses the reaction beta-D-galactosyl-(1&lt;-&gt;1)-sphing-4-enine + H2O = sphing-4-enine + D-galactose. It carries out the reaction a D-galactosylceramide + H2O = an N-acyl-sphingoid base + D-galactose. Hydrolyzes the galactose ester bonds of glycolipids such as galactosylceramide and galactosylsphingosine. Enzyme with very low activity responsible for the lysosomal catabolism of galactosylceramide, a major lipid in myelin, kidney and epithelial cells of small intestine and colon. The chain is Galactocerebrosidase from Homo sapiens (Human).